A 184-amino-acid chain; its full sequence is TRAF-interacting protein with FHA domain-containing protein A (184 aa).

Thr-9 carries the phosphothreonine modification. The region spanning 47 to 103 (VKFGRNSNMCQYTFQDKQVSRIQFVLQPFKQFNSSVLSFEIKNMSKKTSLMVDNQEL) is the FHA domain. The disordered stretch occupies residues 152–184 (NNWPTQNPIPEDGMYSSYFTHRSSPSEMDENEL). Polar residues predominate over residues 168–177 (SYFTHRSSPS).

This sequence belongs to the TIFA family. As to quaternary structure, homooligomer; homooligomerizes following phosphorylation at Thr-9. Interacts with IRAK1, TRAF2 and TRAF6. Interacts with TIFAB; binding to TIFAB inhibits TRAF6 activation, possibly by inducing a conformational change in TIFA. Interacts with ZCCHC11; binding to ZCCHC11 suppresses the TRAF6-dependent activation of NF-kappa-B. Post-translationally, phosphorylated at Thr-9 following detection of ADP-D-glycero-beta-D-manno-heptose (ADP-Heptose) by ALPK1. Phosphorylation at Thr-9 by ALPK1 leads to the formation of an intermolecular binding between the FHA domain and phosphorylated Thr-9, promoting TIFA oligomerization and TIFA-mediated NF-kappa-B activation. As to expression, highly expressed in the spleen and at lower levels in heart, brain, lung, liver, kidney and testes.

The protein localises to the cytoplasm. In terms of biological role, adapter molecule that plays a key role in the activation of pro-inflammatory NF-kappa-B signaling following detection of bacterial pathogen-associated molecular pattern metabolites (PAMPs). Promotes activation of an innate immune response by inducing the oligomerization and polyubiquitination of TRAF6, which leads to the activation of TAK1 and IKK through a proteasome-independent mechanism. TIFA-dependent innate immune response is triggered by ADP-D-glycero-beta-D-manno-heptose (ADP-Heptose), a potent PAMP present in all Gram-negative and some Gram-positive bacteria: ADP-Heptose is recognized by ALPK1, which phosphorylates TIFA at Thr-9, leading to TIFA homooligomerization and subsequent activation of pro-inflammatory NF-kappa-B signaling. The polypeptide is TRAF-interacting protein with FHA domain-containing protein A (Mus musculus (Mouse)).